The chain runs to 350 residues: Lipoyl synthase (350 aa).

Residues M1–V39 form a disordered region. The [4Fe-4S] cluster site is built by C73, C78, C84, C99, C103, C106, and S314. The Radical SAM core domain maps to W85 to M303.

It belongs to the radical SAM superfamily. Lipoyl synthase family. [4Fe-4S] cluster serves as cofactor.

The protein resides in the cytoplasm. The catalysed reaction is [[Fe-S] cluster scaffold protein carrying a second [4Fe-4S](2+) cluster] + N(6)-octanoyl-L-lysyl-[protein] + 2 oxidized [2Fe-2S]-[ferredoxin] + 2 S-adenosyl-L-methionine + 4 H(+) = [[Fe-S] cluster scaffold protein] + N(6)-[(R)-dihydrolipoyl]-L-lysyl-[protein] + 4 Fe(3+) + 2 hydrogen sulfide + 2 5'-deoxyadenosine + 2 L-methionine + 2 reduced [2Fe-2S]-[ferredoxin]. Its pathway is protein modification; protein lipoylation via endogenous pathway; protein N(6)-(lipoyl)lysine from octanoyl-[acyl-carrier-protein]: step 2/2. In terms of biological role, catalyzes the radical-mediated insertion of two sulfur atoms into the C-6 and C-8 positions of the octanoyl moiety bound to the lipoyl domains of lipoate-dependent enzymes, thereby converting the octanoylated domains into lipoylated derivatives. The sequence is that of Lipoyl synthase from Ectopseudomonas mendocina (strain ymp) (Pseudomonas mendocina).